A 381-amino-acid chain; its full sequence is Adaptive-response sensory kinase SasA (381 aa).

In terms of domain architecture, Histidine kinase spans 154–367; sequence MVAHELRTPL…CFYFTVPVWD (214 aa). His157 bears the Phosphohistidine; by autocatalysis mark.

In terms of assembly, homooligomerizes. Interacts with KaiC. Participates in the KaiBC complex, whose core is composed of a KaiC homohexamer and 6 KaiB.

The enzyme catalyses ATP + protein L-histidine = ADP + protein N-phospho-L-histidine.. Member of the two-component regulatory system SasA/RpaA involved in genome-wide circadian gene expression. One of several clock output pathways. Participates in the Kai clock protein complex, the main circadian regulator in cyanobacteria, via its interaction with KaiC. KaiC enhances the autophosphorylation activity of SasA, which then transfers its phosphate group to RpaA to activate it. In addition to its output function, recruits fold-shifted KaiB (KaiB(fs)) to KaiC to cooperatively form the KaiB(6):KaiC(6) complex (independent of SasA kinase activity). Required for robustness of the circadian rhythm of gene expression and is involved in clock output, also required for adaptation to light/dark cycles. The polypeptide is Adaptive-response sensory kinase SasA (Prochlorococcus marinus (strain SARG / CCMP1375 / SS120)).